Consider the following 557-residue polypeptide: Organic cation/carnitine transporter 2 (557 aa).

Residues 1–20 (MRDYDEVTAFLGEWGPFQRL) lie on the Cytoplasmic side of the membrane. Residues 21-41 (IFFLLSASIIPNGFNGMSIVF) traverse the membrane as a helical segment. The Extracellular portion of the chain corresponds to 42-142 (LAGTPEHRCL…DLVCKDDWKA (101 aa)). N-linked (GlcNAc...) asparagine glycosylation is found at asparagine 57, asparagine 64, and asparagine 91. A helical membrane pass occupies residues 143–163 (PLTTSLFFVGVLMGSFISGQL). Topologically, residues 164–172 (SDRFGRKNV) are cytoplasmic. The chain crosses the membrane as a helical span at residues 173–193 (LFLTMGMQTGFSFLQLFSVNF). The Extracellular segment spans residues 194–197 (EMFT). Residues 198-218 (VLFVLVGMGQISNYVAAFVLG) traverse the membrane as a helical segment. Residue 218–225 (GTEILSKS) participates in ATP binding. Residues 219 to 232 (TEILSKSIRIIFAT) are Cytoplasmic-facing. A helical membrane pass occupies residues 233–253 (LGVCIFYAFGFMVLPLFAYFI). Residues 254 to 257 (RDWR) are Extracellular-facing. A helical membrane pass occupies residues 258-278 (MLLLALTVPGVLCGALWWFIP). At 279-341 (ESPRWLISQG…YDLVRTRNIR (63 aa)) the chain is on the cytoplasmic side. Residues 342-362 (IITIMSIILWLTISVGYFGLS) form a helical membrane-spanning segment. Residues 363-373 (LDTPNLHGDIY) are Extracellular-facing. The chain crosses the membrane as a helical span at residues 374–394 (VNCFLLAAVEVPAYVLAWLLL). Residues 395 to 406 (QHLPRRYSISAA) are Cytoplasmic-facing. A helical transmembrane segment spans residues 407–427 (LFLGGSVLLFIQLVPSELFYL). Over 428 to 430 (STA) the chain is Extracellular. The chain crosses the membrane as a helical span at residues 431-451 (LVMVGKFGITSAYSMVYVYTA). Residues 452 to 462 (ELYPTVVRNMG) lie on the Cytoplasmic side of the membrane. The helical transmembrane segment at 463-483 (VGVSSTASRLGSILSPYFVYL) threads the bilayer. At 484–488 (GAYDR) the chain is on the extracellular side. The residue at position 486 (tyrosine 486) is a Phosphotyrosine. A helical transmembrane segment spans residues 489-509 (FLPYILMGSLTILTAILTLFF). The Cytoplasmic segment spans residues 510–557 (PESFGAPLPDTIDQMLRVKGIKQWQIQSQTRTQKDGGESPTVLKSTAF). Positions 537 to 557 (SQTRTQKDGGESPTVLKSTAF) are disordered. Serine 548 carries the phosphoserine modification. Threonine 550 is modified (phosphothreonine).

This sequence belongs to the major facilitator (TC 2.A.1) superfamily. Organic cation transporter (TC 2.A.1.19) family. In terms of assembly, interacts with PDZK1. Expressed in the proximal and distal tubules and in the glomeruli in the kidney, in the myocardium, valves, and arterioles in the heart, in the labyrinthine layer of the placenta, and in the cortex, hippocampus, and cerebellum in the brain. Expressed in Sertoli cells in testis.

The protein resides in the cell membrane. It localises to the apical cell membrane. The protein localises to the basal cell membrane. It carries out the reaction (R)-carnitine(out) + Na(+)(out) = (R)-carnitine(in) + Na(+)(in). The catalysed reaction is O-acetyl-(R)-carnitine(out) + Na(+)(out) = O-acetyl-(R)-carnitine(in) + Na(+)(in). It catalyses the reaction O-propanoyl-(R)-carnitine(out) + Na(+)(out) = O-propanoyl-(R)-carnitine(in) + Na(+)(in). The enzyme catalyses glycine betaine(out) + Na(+)(out) = glycine betaine(in) + Na(+)(in). It carries out the reaction glycine betaine(out) + (R)-carnitine(in) = glycine betaine(in) + (R)-carnitine(out). The catalysed reaction is O-butanoyl-(R)-carnitine(out) + Na(+)(out) = O-butanoyl-(R)-carnitine(in) + Na(+)(in). It catalyses the reaction (S)-carnitine(out) + Na(+)(out) = (S)-carnitine(in) + Na(+)(in). The enzyme catalyses an O-acyl-(R)-carnitine(out) + Na(+)(out) = an O-acyl-(R)-carnitine(in) + Na(+)(in). It carries out the reaction L-glutamyl-L-arginyl-glycyl-L-methionyl-L-threonine(out) + Na(+)(out) = L-glutamyl-L-arginyl-glycyl-L-methionyl-L-threonine(in) + Na(+)(in). The catalysed reaction is N,N-dimethylglycine(out) + Na(+)(out) = N,N-dimethylglycine(in) + Na(+)(in). Inhibited by emetine, quinidine and verapamil. The IC(50) of emetine is 4.2 uM. Not inhibited by valproic acid. Transport of (R)-carnitine is stimulated by cholesterol in the plasma membrane. Sodium-ion dependent, high affinity carnitine transporter. Involved in the active cellular uptake of carnitine. Transports one sodium ion with one molecule of carnitine. Also transports organic cations such as tetraethylammonium (TEA) without the involvement of sodium. Also relative uptake activity ratio of carnitine to TEA is 11.3. May also contribute to regulate the transport of organic compounds in testis across the blood-testis-barrier. The protein is Organic cation/carnitine transporter 2 (Slc22a5) of Rattus norvegicus (Rat).